Consider the following 556-residue polypeptide: Dihydroxy-acid dehydratase (556 aa).

Mg(2+) is bound at residue Asp-78. Cys-119 is a [2Fe-2S] cluster binding site. The Mg(2+) site is built by Asp-120 and Lys-121. At Lys-121 the chain carries N6-carboxylysine. Residue Cys-191 participates in [2Fe-2S] cluster binding. Residue Glu-442 participates in Mg(2+) binding. Ser-468 acts as the Proton acceptor in catalysis.

Belongs to the IlvD/Edd family. Homodimer. [2Fe-2S] cluster serves as cofactor. It depends on Mg(2+) as a cofactor.

The enzyme catalyses (2R)-2,3-dihydroxy-3-methylbutanoate = 3-methyl-2-oxobutanoate + H2O. It carries out the reaction (2R,3R)-2,3-dihydroxy-3-methylpentanoate = (S)-3-methyl-2-oxopentanoate + H2O. It participates in amino-acid biosynthesis; L-isoleucine biosynthesis; L-isoleucine from 2-oxobutanoate: step 3/4. Its pathway is amino-acid biosynthesis; L-valine biosynthesis; L-valine from pyruvate: step 3/4. Functionally, functions in the biosynthesis of branched-chain amino acids. Catalyzes the dehydration of (2R,3R)-2,3-dihydroxy-3-methylpentanoate (2,3-dihydroxy-3-methylvalerate) into 2-oxo-3-methylpentanoate (2-oxo-3-methylvalerate) and of (2R)-2,3-dihydroxy-3-methylbutanoate (2,3-dihydroxyisovalerate) into 2-oxo-3-methylbutanoate (2-oxoisovalerate), the penultimate precursor to L-isoleucine and L-valine, respectively. This chain is Dihydroxy-acid dehydratase, found in Clostridium kluyveri (strain NBRC 12016).